A 159-amino-acid polypeptide reads, in one-letter code: SsrA-binding protein (159 aa).

Basic and acidic residues predominate over residues 131–148 (YDKRQTLREKQDRREAER). The interval 131 to 159 (YDKRQTLREKQDRREAERTISAIKRKQRA) is disordered.

The protein belongs to the SmpB family.

The protein localises to the cytoplasm. In terms of biological role, required for rescue of stalled ribosomes mediated by trans-translation. Binds to transfer-messenger RNA (tmRNA), required for stable association of tmRNA with ribosomes. tmRNA and SmpB together mimic tRNA shape, replacing the anticodon stem-loop with SmpB. tmRNA is encoded by the ssrA gene; the 2 termini fold to resemble tRNA(Ala) and it encodes a 'tag peptide', a short internal open reading frame. During trans-translation Ala-aminoacylated tmRNA acts like a tRNA, entering the A-site of stalled ribosomes, displacing the stalled mRNA. The ribosome then switches to translate the ORF on the tmRNA; the nascent peptide is terminated with the 'tag peptide' encoded by the tmRNA and targeted for degradation. The ribosome is freed to recommence translation, which seems to be the essential function of trans-translation. The protein is SsrA-binding protein of Streptomyces coelicolor (strain ATCC BAA-471 / A3(2) / M145).